The sequence spans 297 residues: Probable endonuclease 4 (297 aa).

The Zn(2+) site is built by His69, His110, Glu145, Asp179, His182, His214, Asp227, His229, and Glu259.

It belongs to the AP endonuclease 2 family. Zn(2+) serves as cofactor.

The catalysed reaction is Endonucleolytic cleavage to 5'-phosphooligonucleotide end-products.. Endonuclease IV plays a role in DNA repair. It cleaves phosphodiester bonds at apurinic or apyrimidinic (AP) sites, generating a 3'-hydroxyl group and a 5'-terminal sugar phosphate. This chain is Probable endonuclease 4, found in Bacillus velezensis (strain DSM 23117 / BGSC 10A6 / LMG 26770 / FZB42) (Bacillus amyloliquefaciens subsp. plantarum).